The primary structure comprises 436 residues: Acetyl-CoA decarbonylase/synthase complex subunit delta (436 aa).

The protein belongs to the CdhD family. In terms of assembly, heterodimer of delta and gamma chains. The ACDS complex is made up of alpha, epsilon, beta, gamma and delta chains with a probable stoichiometry of (alpha(2)epsilon(2))(4)-beta(8)-(gamma(1)delta(1))(8).

The protein operates within one-carbon metabolism; methanogenesis from acetate. Its function is as follows. Part of a complex that catalyzes the reversible cleavage of acetyl-CoA, allowing growth on acetate as sole source of carbon and energy. Probably maintains the overall quaternary structure of the ACDS complex. The sequence is that of Acetyl-CoA decarbonylase/synthase complex subunit delta from Methanosarcina mazei (strain ATCC BAA-159 / DSM 3647 / Goe1 / Go1 / JCM 11833 / OCM 88) (Methanosarcina frisia).